A 396-amino-acid chain; its full sequence is Zinc metalloproteinase nas-24 (396 aa).

The N-terminal stretch at 1–20 (MTRVVHIIGAAFLLSSYAYC) is a signal peptide. The Peptidase M12A domain maps to 44–230 (ERLGSKWLGG…YKINQYYGCG (187 aa)). N-linked (GlcNAc...) asparagine glycosylation is found at asparagine 63 and asparagine 79. 4 disulfide bridges follow: cysteine 82–cysteine 229, cysteine 105–cysteine 129, cysteine 231–cysteine 251, and cysteine 253–cysteine 262. Zn(2+) is bound at residue histidine 137. The active site involves glutamate 138. Zn(2+) contacts are provided by histidine 141 and histidine 147. In terms of domain architecture, EGF-like spans 224-263 (NQYYGCGCSTQLECKNGGYTSPSDCSRCNCPKGFFGKLCN). Asparagine 310 carries an N-linked (GlcNAc...) asparagine glycan.

It depends on Zn(2+) as a cofactor.

Its subcellular location is the secreted. Metalloprotease. This Caenorhabditis elegans protein is Zinc metalloproteinase nas-24 (nas-24).